We begin with the raw amino-acid sequence, 243 residues long: Zinc import ATP-binding protein ZnuC (243 aa).

The 218-residue stretch at 8 to 225 (LNLSNVSYYI…SEFQKLFGHH (218 aa)) folds into the ABC transporter domain. 40–47 (GPNGAGKS) contributes to the ATP binding site.

It belongs to the ABC transporter superfamily. Zinc importer (TC 3.A.1.15.5) family. In terms of assembly, the complex is composed of two ATP-binding proteins (ZnuC), two transmembrane proteins (ZnuB) and a solute-binding protein (ZnuA).

The protein resides in the cell inner membrane. The enzyme catalyses Zn(2+)(out) + ATP(in) + H2O(in) = Zn(2+)(in) + ADP(in) + phosphate(in) + H(+)(in). Its function is as follows. Part of the ABC transporter complex ZnuABC involved in zinc import. Responsible for energy coupling to the transport system. The polypeptide is Zinc import ATP-binding protein ZnuC (Psychrobacter arcticus (strain DSM 17307 / VKM B-2377 / 273-4)).